A 217-amino-acid polypeptide reads, in one-letter code: Uracil-DNA glycosylase (217 aa).

Asp62 functions as the Proton acceptor in the catalytic mechanism.

It belongs to the uracil-DNA glycosylase (UDG) superfamily. UNG family.

The protein localises to the cytoplasm. The enzyme catalyses Hydrolyzes single-stranded DNA or mismatched double-stranded DNA and polynucleotides, releasing free uracil.. Excises uracil residues from the DNA which can arise as a result of misincorporation of dUMP residues by DNA polymerase or due to deamination of cytosine. This chain is Uracil-DNA glycosylase, found in Streptococcus equi subsp. equi (strain 4047).